Here is a 403-residue protein sequence, read N- to C-terminus: D-mannonate dehydratase Caul1427 (403 aa).

Residues Asn-38 and His-123 each coordinate substrate. Tyr-160 functions as the Proton donor/acceptor in the catalytic mechanism. Asp-211 serves as a coordination point for Mg(2+). His-213 serves as the catalytic Proton donor/acceptor. 2 residues coordinate Mg(2+): Glu-237 and Glu-263. Residues Glu-263, Arg-284, His-313, Asp-317, and Glu-340 each coordinate substrate.

This sequence belongs to the mandelate racemase/muconate lactonizing enzyme family. GalD subfamily. Mg(2+) is required as a cofactor.

The enzyme catalyses D-mannonate = 2-dehydro-3-deoxy-D-gluconate + H2O. It functions in the pathway carbohydrate metabolism; pentose and glucuronate interconversion. Its function is as follows. Catalyzes the dehydration of D-mannonate. Has no detectable activity with a panel of 70 other acid sugars (in vitro). This Caulobacter sp. (strain K31) protein is D-mannonate dehydratase Caul1427.